The sequence spans 116 residues: Aspartate 1-decarboxylase (116 aa).

Catalysis depends on Ser-25, which acts as the Schiff-base intermediate with substrate; via pyruvic acid. Residue Ser-25 is modified to Pyruvic acid (Ser). Thr-57 lines the substrate pocket. Tyr-58 (proton donor) is an active-site residue. A substrate-binding site is contributed by 72-74 (GAA).

Belongs to the PanD family. As to quaternary structure, heterooctamer of four alpha and four beta subunits. Pyruvate serves as cofactor. In terms of processing, is synthesized initially as an inactive proenzyme, which is activated by self-cleavage at a specific serine bond to produce a beta-subunit with a hydroxyl group at its C-terminus and an alpha-subunit with a pyruvoyl group at its N-terminus.

Its subcellular location is the cytoplasm. It catalyses the reaction L-aspartate + H(+) = beta-alanine + CO2. It participates in cofactor biosynthesis; (R)-pantothenate biosynthesis; beta-alanine from L-aspartate: step 1/1. Catalyzes the pyruvoyl-dependent decarboxylation of aspartate to produce beta-alanine. In Helicobacter pylori (strain HPAG1), this protein is Aspartate 1-decarboxylase.